Reading from the N-terminus, the 70-residue chain is VIIIAVLFLTACQLTTAETSSRGKQKHRALRSTDKNSKLTRGCTPPGGACGGHAHCCSQSCDILASTCNA.

Residues 1–17 form the signal peptide; sequence VIIIAVLFLTACQLTTA. Residues 18–41 constitute a propeptide that is removed on maturation; the sequence is ETSSRGKQKHRALRSTDKNSKLTR. A disordered region spans residues 20–41; sequence SSRGKQKHRALRSTDKNSKLTR. 3 disulfides stabilise this stretch: Cys-43/Cys-57, Cys-50/Cys-61, and Cys-56/Cys-68.

The protein belongs to the conotoxin O1 superfamily. Expressed by the venom duct.

Its subcellular location is the secreted. The polypeptide is Conotoxin AbVIB (Conus abbreviatus (Abbreviated cone)).